Here is a 264-residue protein sequence, read N- to C-terminus: Undecaprenyl-diphosphatase (264 aa).

The next 8 membrane-spanning stretches (helical) occupy residues 7–27 (IVLA…SAHL), 41–61 (LIFD…YYQA), 89–109 (VLLG…FVAV), 114–134 (IEII…ASWF), 144–164 (TISW…LIPG), 186–206 (IQFS…LMLI), 219–239 (LLVL…IFVI), and 244–264 (MVGM…LFFL).

The protein belongs to the UppP family.

It is found in the cell inner membrane. The catalysed reaction is di-trans,octa-cis-undecaprenyl diphosphate + H2O = di-trans,octa-cis-undecaprenyl phosphate + phosphate + H(+). Its function is as follows. Catalyzes the dephosphorylation of undecaprenyl diphosphate (UPP). Confers resistance to bacitracin. The protein is Undecaprenyl-diphosphatase of Vesicomyosocius okutanii subsp. Calyptogena okutanii (strain HA).